Here is a 206-residue protein sequence, read N- to C-terminus: Large ribosomal subunit protein uL4 (206 aa).

The span at 65-76 (KQKGTGRARHSS) shows a compositional bias: basic residues. Positions 65 to 94 (KQKGTGRARHSSARAPQFRGGGKAHGPVVR) are disordered.

Belongs to the universal ribosomal protein uL4 family. In terms of assembly, part of the 50S ribosomal subunit.

In terms of biological role, one of the primary rRNA binding proteins, this protein initially binds near the 5'-end of the 23S rRNA. It is important during the early stages of 50S assembly. It makes multiple contacts with different domains of the 23S rRNA in the assembled 50S subunit and ribosome. Its function is as follows. Forms part of the polypeptide exit tunnel. This chain is Large ribosomal subunit protein uL4, found in Bartonella quintana (strain Toulouse) (Rochalimaea quintana).